Here is a 511-residue protein sequence, read N- to C-terminus: S-layer protein B (511 aa).

A signal peptide spans 1–24; sequence MVKYMNLIVLGMLMFGVFVTLSLG. Residues 358–392 are a coiled coil; the sequence is IQRLQSEVSVLESEVDQLKVEIQSLNETLTLQASE. Residues 487–507 form a helical membrane-spanning segment; sequence GGIILGVIALIIAIVAVVLVF.

This sequence belongs to the Sulfolobales SlaB family. In terms of assembly, the mushroom-shaped unit cells of the Sulfolobales' S-layers may consist of three SlaB subunits and six SlaA subunits.

It localises to the secreted. The protein resides in the cell wall. Its subcellular location is the S-layer. The protein localises to the cell membrane. S-layer small protein. May anchor the complex to the cell membrane. The sequence is that of S-layer protein B from Acidianus ambivalens (Desulfurolobus ambivalens).